A 394-amino-acid chain; its full sequence is DNA replication and repair protein RecF (394 aa).

30–37 lines the ATP pocket; it reads GRNGFGKT.

Belongs to the RecF family.

The protein localises to the cytoplasm. In terms of biological role, the RecF protein is involved in DNA metabolism; it is required for DNA replication and normal SOS inducibility. RecF binds preferentially to single-stranded, linear DNA. It also seems to bind ATP. The polypeptide is DNA replication and repair protein RecF (Corynebacterium glutamicum (strain ATCC 13032 / DSM 20300 / JCM 1318 / BCRC 11384 / CCUG 27702 / LMG 3730 / NBRC 12168 / NCIMB 10025 / NRRL B-2784 / 534)).